Here is a 570-residue protein sequence, read N- to C-terminus: Sulfite reductase [NADPH] hemoprotein beta-component (570 aa).

C434, C440, C479, and C483 together coordinate [4Fe-4S] cluster. C483 is a siroheme binding site.

The protein belongs to the nitrite and sulfite reductase 4Fe-4S domain family. In terms of assembly, alpha(8)-beta(8). The alpha component is a flavoprotein, the beta component is a hemoprotein. Siroheme is required as a cofactor. Requires [4Fe-4S] cluster as cofactor.

It carries out the reaction hydrogen sulfide + 3 NADP(+) + 3 H2O = sulfite + 3 NADPH + 4 H(+). It participates in sulfur metabolism; hydrogen sulfide biosynthesis; hydrogen sulfide from sulfite (NADPH route): step 1/1. Component of the sulfite reductase complex that catalyzes the 6-electron reduction of sulfite to sulfide. This is one of several activities required for the biosynthesis of L-cysteine from sulfate. This is Sulfite reductase [NADPH] hemoprotein beta-component from Zymomonas mobilis subsp. mobilis (strain ATCC 31821 / ZM4 / CP4).